Here is a 423-residue protein sequence, read N- to C-terminus: Putative competence-damage inducible protein (423 aa).

Belongs to the CinA family.

The polypeptide is Putative competence-damage inducible protein (Streptococcus pyogenes serotype M3 (strain ATCC BAA-595 / MGAS315)).